The chain runs to 361 residues: Phospho-N-acetylmuramoyl-pentapeptide-transferase (361 aa).

Helical transmembrane passes span 25–45 (RGIL…PAVI), 73–93 (TMGG…WGDL), 98–118 (VWLV…DDWI), 139–159 (IFGL…AAIT), 168–188 (IALP…IVGF), 200–220 (GLAI…AYAS), 237–257 (AGEL…FLWF), 264–284 (VFMG…IAVI), 289–309 (MVLV…MIQV), and 339–359 (VIVR…ATLK).

It belongs to the glycosyltransferase 4 family. MraY subfamily. Mg(2+) serves as cofactor.

The protein resides in the cell inner membrane. It carries out the reaction UDP-N-acetyl-alpha-D-muramoyl-L-alanyl-gamma-D-glutamyl-meso-2,6-diaminopimeloyl-D-alanyl-D-alanine + di-trans,octa-cis-undecaprenyl phosphate = di-trans,octa-cis-undecaprenyl diphospho-N-acetyl-alpha-D-muramoyl-L-alanyl-D-glutamyl-meso-2,6-diaminopimeloyl-D-alanyl-D-alanine + UMP. Its pathway is cell wall biogenesis; peptidoglycan biosynthesis. Catalyzes the initial step of the lipid cycle reactions in the biosynthesis of the cell wall peptidoglycan: transfers peptidoglycan precursor phospho-MurNAc-pentapeptide from UDP-MurNAc-pentapeptide onto the lipid carrier undecaprenyl phosphate, yielding undecaprenyl-pyrophosphoryl-MurNAc-pentapeptide, known as lipid I. In Xanthomonas axonopodis pv. citri (strain 306), this protein is Phospho-N-acetylmuramoyl-pentapeptide-transferase.